We begin with the raw amino-acid sequence, 537 residues long: Tyrosine-protein kinase Fyn (537 aa).

Residue G2 is the site of N-myristoyl glycine attachment. 2 S-palmitoyl cysteine lipidation sites follow: C3 and C6. Residues 14 to 35 form a disordered region; that stretch reads LTEERDGSLNQSSGYRYGTDPT. A phosphoserine mark is found at S21 and S26. The SH3 domain maps to 82 to 143; it reads TGVTLFVALY…PSNYVAPVDS (62 aa). The SH2 domain occupies 149–246; the sequence is WYFGKLGRKD…GLCCRLVVPC (98 aa). The residue at position 185 (Y185) is a Phosphotyrosine. The 254-residue stretch at 271–524 folds into the Protein kinase domain; that stretch reads LQLIKRLGNG…YLQGFLEDYF (254 aa). ATP-binding positions include 277–285 and K299; that span reads LGNGQFGEV. D390 functions as the Proton acceptor in the catalytic mechanism. Phosphotyrosine; by autocatalysis is present on Y420. Y531 is modified (phosphotyrosine).

The protein belongs to the protein kinase superfamily. Tyr protein kinase family. SRC subfamily. As to quaternary structure, interacts (via its SH3 domain) with PIK3R1 and PRMT8. Interacts with FYB1, PAG1, and SH2D1A. Interacts with CD79A (tyrosine-phosphorylated form); the interaction increases FYN activity. Interacts (via SH2 domain) with CSF1R (tyrosine phosphorylated). Interacts with TOM1L1 (phosphorylated form). Interacts with KDR (tyrosine phosphorylated). Interacts (via SH3 domain) with KLHL2 (via N-terminus). Interacts with SH2D1A and SLAMF1. Interacts with ITCH; the interaction phosphorylates ITCH and negatively regulates its activity. Interacts with FASLG. Interacts with RUNX3. Interacts with KIT. Interacts with EPHA8; possible downstream effector of EPHA8 in regulation of cell adhesion. Interacts with PTK2/FAK1; this interaction leads to PTK2/FAK1 phosphorylation and activation. Interacts with CAV1; this interaction couples integrins to the Ras-ERK pathway. Interacts with UNC119. Interacts (via SH2 domain) with PTPRH (phosphorylated form). Interacts with PTPRO (phosphorylated form). Interacts with PTPRB (phosphorylated form). Interacts with FYB2. Interacts with DSCAM. Interacts with SKAP1 and FYB1; this interaction promotes the phosphorylation of CLNK. Interacts with NEDD9; in the presence of PTK2. Requires Mn(2+) as cofactor. Post-translationally, autophosphorylated at Tyr-420. Phosphorylation on the C-terminal tail at Tyr-531 by CSK maintains the enzyme in an inactive state. PTPRC/CD45 dephosphorylates Tyr-531 leading to activation. Dephosphorylation at Tyr-420 by PTPN2 negatively regulates T-cell receptor signaling. Phosphorylated at tyrosine residues, which can be enhanced by NTN1. In terms of processing, palmitoylated. Palmitoylation at Cys-3 and Cys-6, probably by ZDHHC21, regulates subcellular location. Detected in spinal cord oligodendrocytes (at protein level).

It is found in the cytoplasm. It localises to the nucleus. The protein resides in the cell membrane. Its subcellular location is the perikaryon. It catalyses the reaction L-tyrosyl-[protein] + ATP = O-phospho-L-tyrosyl-[protein] + ADP + H(+). Its activity is regulated as follows. Inhibited by phosphorylation of Tyr-531 by leukocyte common antigen and activated by dephosphorylation of this site. Its function is as follows. Non-receptor tyrosine-protein kinase that plays a role in many biological processes including regulation of cell growth and survival, cell adhesion, integrin-mediated signaling, cytoskeletal remodeling, cell motility, immune response and axon guidance. Inactive FYN is phosphorylated on its C-terminal tail within the catalytic domain. Following activation by PKA, the protein subsequently associates with PTK2/FAK1, allowing PTK2/FAK1 phosphorylation, activation and targeting to focal adhesions. Involved in the regulation of cell adhesion and motility through phosphorylation of CTNNB1 (beta-catenin) and CTNND1 (delta-catenin). Regulates cytoskeletal remodeling by phosphorylating several proteins including the actin regulator WAS and the microtubule-associated proteins MAP2 and MAPT. Promotes cell survival by phosphorylating AGAP2/PIKE-A and preventing its apoptotic cleavage. Participates in signal transduction pathways that regulate the integrity of the glomerular slit diaphragm (an essential part of the glomerular filter of the kidney) by phosphorylating several slit diaphragm components including NPHS1, KIRREL1 and TRPC6. Plays a role in neural processes by phosphorylating DPYSL2, a multifunctional adapter protein within the central nervous system, ARHGAP32, a regulator for Rho family GTPases implicated in various neural functions, and SNCA, a small pre-synaptic protein. Involved in reelin signaling by mediating phosphorylation of DAB1 following reelin (RELN)-binding to its receptor. Participates in the downstream signaling pathways that lead to T-cell differentiation and proliferation following T-cell receptor (TCR) stimulation. Phosphorylates PTK2B/PYK2 in response to T-cell receptor activation. Also participates in negative feedback regulation of TCR signaling through phosphorylation of PAG1, thereby promoting interaction between PAG1 and CSK and recruitment of CSK to lipid rafts. CSK maintains LCK and FYN in an inactive form. Promotes CD28-induced phosphorylation of VAV1. In mast cells, phosphorylates CLNK after activation of immunoglobulin epsilon receptor signaling. Can also promote CD244-mediated NK cell activation. This Rattus norvegicus (Rat) protein is Tyrosine-protein kinase Fyn.